Here is a 554-residue protein sequence, read N- to C-terminus: Potassium-transporting ATPase potassium-binding subunit (554 aa).

12 helical membrane passes run 3–23, 60–80, 131–151, 174–194, 252–272, 279–299, 323–343, 352–372, 375–395, 412–432, 481–501, and 522–542; these read PVLA…LAHV, PAYL…LYLL, GLAV…VALV, VRVL…CGVI, LFEI…FGIM, GYAI…LMMW, FGIG…TGAV, GLGG…PGGV, GLYG…LMVG, FAAC…AAAM, LGLA…ALAG, and LFAG…YFPA.

This sequence belongs to the KdpA family. As to quaternary structure, the system is composed of three essential subunits: KdpA, KdpB and KdpC.

It is found in the cell membrane. Part of the high-affinity ATP-driven potassium transport (or Kdp) system, which catalyzes the hydrolysis of ATP coupled with the electrogenic transport of potassium into the cytoplasm. This subunit binds the extracellular potassium ions and delivers the ions to the membrane domain of KdpB through an intramembrane tunnel. This chain is Potassium-transporting ATPase potassium-binding subunit, found in Streptomyces coelicolor (strain ATCC BAA-471 / A3(2) / M145).